We begin with the raw amino-acid sequence, 244 residues long: Krueppel-like factor 9 (244 aa).

2 disordered regions span residues 24–51 and 80–142; these read VPEH…GDPG and SVCS…SEKR. Residues 32–51 show a composition bias toward basic and acidic residues; it reads DAERLRLPEREVTKEHGDPG. Position 122 is a phosphoserine (S122). 3 consecutive C2H2-type zinc fingers follow at residues 143 to 167, 173 to 197, and 203 to 225; these read HKCP…YRVH, FPCT…YRTH, and FRCP…ARRH.

It belongs to the Sp1 C2H2-type zinc-finger protein family. Interacts with ZZEF1.

It localises to the nucleus. Transcription factor that binds to GC box promoter elements. Selectively activates mRNA synthesis from genes containing tandem repeats of GC boxes but represses genes with a single GC box. Acts as an epidermal circadian transcription factor regulating keratinocyte proliferation. The polypeptide is Krueppel-like factor 9 (KLF9) (Sus scrofa (Pig)).